A 416-amino-acid polypeptide reads, in one-letter code: Serine/threonine-protein kinase 26 (416 aa).

Ala-2 is subject to N-acetylalanine. Ser-4 carries the post-translational modification Phosphoserine. The Protein kinase domain occupies 24–274; sequence FTKLERIGKG…AKELLKHKFI (251 aa). Residues 30–38 and Lys-53 contribute to the ATP site; that span reads IGKGSFGEV. The active-site Proton acceptor is Asp-144. Residue Thr-178 is modified to Phosphothreonine; by autocatalysis. The disordered stretch occupies residues 296–343; sequence AEGHSDEESDSEGSDSESSSRESNPHPEWSFTTVRKKPDPKKLQNGEE. A phosphoserine mark is found at Ser-300, Ser-304, Ser-306, Ser-309, and Ser-325. Residues Thr-327 and Thr-328 each carry the phosphothreonine modification. The span at 331–340 shows a compositional bias: basic and acidic residues; the sequence is KKPDPKKLQN.

It belongs to the protein kinase superfamily. STE Ser/Thr protein kinase family. STE20 subfamily. In terms of assembly, homodimer. Interacts with PDCD10. Interacts with GOLGA2. Interacts with CTTNBP2NL. Interacts with RIPOR1 (via C-terminus); this interaction occurs in a PDCD10-dependent and Rho-independent manner. Interacts with PDCD10; this interaction is required for the association of STK26 with RIPOR1. Part of the core of STRIPAK complexes composed of PP2A catalytic and scaffolding subunits, the striatins (PP2A regulatory subunits), the striatin-associated proteins MOB4, STRIP1 and STRIP2, PDCD10 and members of the STE20 kinases, such as STK24 and STK26. The cofactor is Mg(2+).

The protein resides in the cytoplasm. The protein localises to the golgi apparatus. It carries out the reaction L-seryl-[protein] + ATP = O-phospho-L-seryl-[protein] + ADP + H(+). The catalysed reaction is L-threonyl-[protein] + ATP = O-phospho-L-threonyl-[protein] + ADP + H(+). With respect to regulation, interaction with Golgi matrix protein GOLGA2 leads to autophosphorylation on Thr-178, possibly as a consequence of stabilization of dimer formation. May also be activated by C-terminal cleavage. Functionally, serine/threonine-protein kinase that acts as a mediator of cell growth. Modulates apoptosis. In association with STK24 negatively regulates Golgi reorientation in polarized cell migration upon RHO activation. Phosphorylates ATG4B at 'Ser-383', thereby increasing autophagic flux. Part of the striatin-interacting phosphatase and kinase (STRIPAK) complexes. STRIPAK complexes have critical roles in protein (de)phosphorylation and are regulators of multiple signaling pathways including Hippo, MAPK, nuclear receptor and cytoskeleton remodeling. Different types of STRIPAK complexes are involved in a variety of biological processes such as cell growth, differentiation, apoptosis, metabolism and immune regulation. The chain is Serine/threonine-protein kinase 26 from Mus musculus (Mouse).